The primary structure comprises 389 residues: Na(+)/H(+) antiporter NhaA (389 aa).

A run of 11 helical transmembrane segments spans residues 14–34 (AGGI…NSPL), 59–79 (LLLW…GLEV), 95–115 (SLPS…YLLF), 124–144 (AGWA…MALL), 154–174 (VFLL…IALF), 177–197 (SDLS…LVGL), 213–233 (LILW…GVII), 261–281 (FLIL…NMSL), 290–310 (IGIA…FSFI), 328–348 (IAPV…IASL), and 363–383 (LGTL…LSKV).

The protein belongs to the NhaA Na(+)/H(+) (TC 2.A.33) antiporter family.

The protein localises to the cell inner membrane. It catalyses the reaction Na(+)(in) + 2 H(+)(out) = Na(+)(out) + 2 H(+)(in). Functionally, na(+)/H(+) antiporter that extrudes sodium in exchange for external protons. The chain is Na(+)/H(+) antiporter NhaA from Shewanella sp. (strain W3-18-1).